The following is a 518-amino-acid chain: Protein nucleotidyltransferase YdiU (518 aa).

Residues glycine 99, glycine 101, arginine 102, lysine 122, aspartate 134, glycine 135, arginine 192, and arginine 199 each contribute to the ATP site. Aspartate 270 (proton acceptor) is an active-site residue. Mg(2+) contacts are provided by asparagine 271 and aspartate 280. Residue aspartate 280 participates in ATP binding.

Belongs to the SELO family. Mg(2+) serves as cofactor. Mn(2+) is required as a cofactor.

It catalyses the reaction L-seryl-[protein] + ATP = 3-O-(5'-adenylyl)-L-seryl-[protein] + diphosphate. The catalysed reaction is L-threonyl-[protein] + ATP = 3-O-(5'-adenylyl)-L-threonyl-[protein] + diphosphate. The enzyme catalyses L-tyrosyl-[protein] + ATP = O-(5'-adenylyl)-L-tyrosyl-[protein] + diphosphate. It carries out the reaction L-histidyl-[protein] + UTP = N(tele)-(5'-uridylyl)-L-histidyl-[protein] + diphosphate. It catalyses the reaction L-seryl-[protein] + UTP = O-(5'-uridylyl)-L-seryl-[protein] + diphosphate. The catalysed reaction is L-tyrosyl-[protein] + UTP = O-(5'-uridylyl)-L-tyrosyl-[protein] + diphosphate. Functionally, nucleotidyltransferase involved in the post-translational modification of proteins. It can catalyze the addition of adenosine monophosphate (AMP) or uridine monophosphate (UMP) to a protein, resulting in modifications known as AMPylation and UMPylation. The polypeptide is Protein nucleotidyltransferase YdiU (Methylobacillus flagellatus (strain ATCC 51484 / DSM 6875 / VKM B-1610 / KT)).